Here is a 229-residue protein sequence, read N- to C-terminus: Extracellular small neutral protease (229 aa).

An N-terminal signal peptide occupies residues Met1–Ala28. Positions Thr29–Thr81 are excised as a propeptide. Ca(2+) contacts are provided by Asp159 and Thr161. His166 is a binding site for Zn(2+). Residue Glu167 is part of the active site. The Zn(2+) site is built by His170 and Asp176. Cys182 and Cys195 are disulfide-bonded.

Belongs to the peptidase M7 family. As to quaternary structure, monomer. Requires Ca(2+) as cofactor. It depends on Zn(2+) as a cofactor.

It localises to the secreted. It carries out the reaction Hydrolyzes proteins with a preference for Tyr or Phe in the P1' position. Has no action on amino-acid p-nitroanilides.. In terms of biological role, milk hydrolyzing. This Streptomyces sp. (strain C5) protein is Extracellular small neutral protease (snpA).